The primary structure comprises 417 residues: UDP-N-acetylglucosamine 1-carboxyvinyltransferase (417 aa).

Position 22–23 (22–23 (KN)) interacts with phosphoenolpyruvate. Position 91 (Arg-91) interacts with UDP-N-acetyl-alpha-D-glucosamine. The Proton donor role is filled by Cys-115. A 2-(S-cysteinyl)pyruvic acid O-phosphothioketal modification is found at Cys-115. UDP-N-acetyl-alpha-D-glucosamine is bound by residues 120 to 124 (RPVDL), Asp-304, and Ile-326.

Belongs to the EPSP synthase family. MurA subfamily.

The protein resides in the cytoplasm. It catalyses the reaction phosphoenolpyruvate + UDP-N-acetyl-alpha-D-glucosamine = UDP-N-acetyl-3-O-(1-carboxyvinyl)-alpha-D-glucosamine + phosphate. It participates in cell wall biogenesis; peptidoglycan biosynthesis. In terms of biological role, cell wall formation. Adds enolpyruvyl to UDP-N-acetylglucosamine. The sequence is that of UDP-N-acetylglucosamine 1-carboxyvinyltransferase from Nitratidesulfovibrio vulgaris (strain DSM 19637 / Miyazaki F) (Desulfovibrio vulgaris).